The following is a 1426-amino-acid chain: MTEALQWARYHWRRLIRGATRDDDSGPYNYSSLLACGRKSSQTPKLSGRHRIVVPHIQPFKDEYEKFSGAYVNNRIRTTKYTLLNFVPRNLFEQFHRAANLYFLFLVVLNWVPLVEAFQKEITMLPLVVVLTIIAIKDGLEDYRKYKIDKQINNLITKVYSRKEKKYIDRCWKDVTVGDFIRLSCNEVIPADMVLLFSTDPDGICHIETSGLDGESNLKQRQVVRGYAEQDSEVDPEKFSSRIECESPNNDLSRFRGFLEHSNKERVGLSKENLLLRGCTIRNTEAVVGIVVYAGHETKAMLNNSGPRYKRSKLERRANTDVLWCVMLLVIMCLTGAVGHGIWLSRYEKMHFFNVPEPDGHIISPLLAGFYMFWTMIILLQVLIPISLYVSIEIVKLGQIYFIQSDVDFYNEKMDSIVQCRALNIAEDLGQIQYLFSDKTGTLTENKMVFRRCSVAGFDYCHEENARRLESYQEAVSEDEDFIDTVSGSLSNMAKPRAPSCRTVHNGPLGNKPSNHLAGSSFTLGSGEGASEVPHSRQAAFSSPIETDVVPDTRLLDKFSQITPRLFMPLDETIQNPPMETLYIIDFFIALAICNTVVVSAPNQPRQKIRHPSLGGLPIKSLEEIKSLFQRWSVRRSSSPSLNSGKEPSSGVPNAFVSRLPLFSRMKPASPVEEEVSQVCESPQCSSSSACCTETEKQHGDAGLLNGKAESLPGQPLACNLCYEAESPDEAALVYAARAYQCTLRSRTPEQVMVDFAALGPLTFQLLHILPFDSVRKRMSVVVRHPLSNQVVVYTKGADSVIMELLSVASPDGASLEKQQMIVREKTQKHLDDYAKQGLRTLCIAKKVMSDTEYAEWLRNHFLAETSIDNREELLLESAMRLENKLTLLGATGIEDRLQEGVPESIEALHKAGIKIWMLTGDKQETAVNIAYACKLLEPDDKLFILNTQSKDACGMLMSTILKELQKKTQALPEQVSLSEDLLQPPVPRDSGLRAGLIITGKTLEFALQESLQKQFLELTSWCQAVVCCRATPLQKSEVVKLVRSHLQVMTLAIGDGANDVSMIQVADIGIGVSGQEGMQAVMASDFAVSQFKHLSKLLLVHGHWCYTRLSNMILYFFYKNVAYVNLLFWYQFFCGFSGTSMTDYWVLIFFNLLFTSAPPVIYGVLEKDVSAETLMQLPELYRSGQKSEAYLPHTFWITLLDAFYQSLVCFFVPYFTYQGSDTDIFAFGNPLNTAALFIVLLHLVIESKSLTWIHLLVIIGSILSYFLFAIVFGAMCVTCNPPSNPYWIMQEHMLDPVFYLVCILTTSIALLPRFVYRVLQGSLFPSPILRAKHFDRLTPEERTKALKKWRGAGKMNQVTSKYANQSAGKSGRRPMPGPSAVFAMKSASSCAIEQGNLSLCETALDQGYSETKAFEMAGPSKGKES.

Residues 1–97 are Cytoplasmic-facing; it reads MTEALQWARY…PRNLFEQFHR (97 aa). The helical transmembrane segment at 98–118 threads the bilayer; sequence AANLYFLFLVVLNWVPLVEAF. Over 119–121 the chain is Exoplasmic loop; it reads QKE. Residues 122-142 traverse the membrane as a helical segment; the sequence is ITMLPLVVVLTIIAIKDGLED. Over 143 to 321 the chain is Cytoplasmic; the sequence is YRKYKIDKQI…SKLERRANTD (179 aa). A helical membrane pass occupies residues 322–342; the sequence is VLWCVMLLVIMCLTGAVGHGI. Over 343 to 365 the chain is Exoplasmic loop; that stretch reads WLSRYEKMHFFNVPEPDGHIISP. Residues 366-386 form a helical membrane-spanning segment; that stretch reads LLAGFYMFWTMIILLQVLIPI. Residues 387-1113 lie on the Cytoplasmic side of the membrane; sequence SLYVSIEIVK…HWCYTRLSNM (727 aa). The 4-aspartylphosphate intermediate role is filled by aspartate 438. Residues aspartate 438, lysine 439, and threonine 440 each coordinate ATP. Residue aspartate 438 participates in Mg(2+) binding. Residue threonine 440 participates in Mg(2+) binding. The tract at residues 506–531 is disordered; the sequence is NGPLGNKPSNHLAGSSFTLGSGEGAS. A compositionally biased stretch (polar residues) spans 512–524; sequence KPSNHLAGSSFTL. ATP-binding positions include glutamate 730, phenylalanine 772, lysine 796, arginine 840, threonine 920, glycine 921, aspartate 922, 996–1003, arginine 1030, and lysine 1036; that span reads GLIITGKT. Residue aspartate 1056 coordinates Mg(2+). ATP is bound by residues asparagine 1059 and aspartate 1060. Aspartate 1060 is a Mg(2+) binding site. Residues 1114-1134 traverse the membrane as a helical segment; the sequence is ILYFFYKNVAYVNLLFWYQFF. The Exoplasmic loop portion of the chain corresponds to 1135 to 1145; it reads CGFSGTSMTDY. The helical transmembrane segment at 1146 to 1166 threads the bilayer; the sequence is WVLIFFNLLFTSAPPVIYGVL. The Cytoplasmic segment spans residues 1167-1195; sequence EKDVSAETLMQLPELYRSGQKSEAYLPHT. The helical transmembrane segment at 1196 to 1216 threads the bilayer; the sequence is FWITLLDAFYQSLVCFFVPYF. Topologically, residues 1217-1224 are exoplasmic loop; that stretch reads TYQGSDTD. A helical membrane pass occupies residues 1225–1245; it reads IFAFGNPLNTAALFIVLLHLV. The Cytoplasmic portion of the chain corresponds to 1246–1252; that stretch reads IESKSLT. Residues 1253–1273 traverse the membrane as a helical segment; the sequence is WIHLLVIIGSILSYFLFAIVF. Over 1274-1292 the chain is Exoplasmic loop; the sequence is GAMCVTCNPPSNPYWIMQE. Residues 1293–1313 form a helical membrane-spanning segment; the sequence is HMLDPVFYLVCILTTSIALLP. The Cytoplasmic segment spans residues 1314-1426; sequence RFVYRVLQGS…MAGPSKGKES (113 aa). 1364-1371 lines the ATP pocket; it reads ANQSAGKS.

The protein belongs to the cation transport ATPase (P-type) (TC 3.A.3) family. Type IV subfamily. Component of a P4-ATPase flippase complex which consists of a catalytic alpha subunit ATP10A and an accessory beta subunit TMEM30A. It depends on Mg(2+) as a cofactor. Post-translationally, autophosphorylated at the conserved aspartate of the P-type ATPase signature sequence. In terms of tissue distribution, expressed in placenta and, to a lesser extent, in kidney.

The protein resides in the cell membrane. Its subcellular location is the endoplasmic reticulum membrane. It catalyses the reaction ATP + H2O + phospholipidSide 1 = ADP + phosphate + phospholipidSide 2.. The catalysed reaction is a beta-D-glucosyl-(1&lt;-&gt;1')-N-acylsphing-4-enine(out) + ATP + H2O = a beta-D-glucosyl-(1&lt;-&gt;1')-N-acylsphing-4-enine(in) + ADP + phosphate + H(+). Its function is as follows. Catalytic component of a P4-ATPase flippase complex, which catalyzes the hydrolysis of ATP coupled to the transport of glucosylceramide (GlcCer) from the outer to the inner leaflet of the plasma membrane. The sequence is that of Phospholipid-transporting ATPase VD from Homo sapiens (Human).